The chain runs to 119 residues: Ribonuclease P protein component (119 aa).

This sequence belongs to the RnpA family. As to quaternary structure, consists of a catalytic RNA component (M1 or rnpB) and a protein subunit.

The enzyme catalyses Endonucleolytic cleavage of RNA, removing 5'-extranucleotides from tRNA precursor.. RNaseP catalyzes the removal of the 5'-leader sequence from pre-tRNA to produce the mature 5'-terminus. It can also cleave other RNA substrates such as 4.5S RNA. The protein component plays an auxiliary but essential role in vivo by binding to the 5'-leader sequence and broadening the substrate specificity of the ribozyme. This chain is Ribonuclease P protein component, found in Serratia proteamaculans (strain 568).